We begin with the raw amino-acid sequence, 470 residues long: Carboxypeptidase Q (470 aa).

Residues Met-1 to Gly-18 form the signal peptide. Positions Lys-19–Glu-42 are excised as a propeptide. An N-linked (GlcNAc...) asparagine glycan is attached at Asn-59. Positions 288 and 300 each coordinate Zn(2+). The Nucleophile role is filled by Glu-334. A Zn(2+)-binding site is contributed by Glu-335. N-linked (GlcNAc...) asparagine glycosylation occurs at Asn-351. Asp-362 serves as a coordination point for Zn(2+). An N-linked (GlcNAc...) asparagine glycan is attached at Asn-394. His-432 contributes to the Zn(2+) binding site.

The protein belongs to the peptidase M28 family. Homodimer. The monomeric form is inactive while the homodimer is active. N-glycosylated. The secreted form is modified by hybrid or complex type oligosaccharide chains.

It is found in the endoplasmic reticulum. The protein localises to the golgi apparatus. Its subcellular location is the lysosome. The protein resides in the secreted. Its function is as follows. Carboxypeptidase that may play an important role in the hydrolysis of circulating peptides. Catalyzes the hydrolysis of dipeptides with unsubstituted terminals into amino acids. May play a role in the liberation of thyroxine hormone from its thyroglobulin (Tg) precursor. This Mus musculus (Mouse) protein is Carboxypeptidase Q (Cpq).